Consider the following 424-residue polypeptide: Endoglucanase (424 aa).

Residues 1–19 form the signal peptide; the sequence is MHRCMPLVAASMAALMLAG. Cysteine 20 carries the N-palmitoyl cysteine lipid modification. The S-diacylglycerol cysteine moiety is linked to residue cysteine 20. Positions 20–43 are excised as a propeptide; that stretch reads CGGGDGDTTLSTAAATDTTTLKTA. Catalysis depends on glutamate 247, which acts as the Proton donor. Glutamate 359 functions as the Nucleophile in the catalytic mechanism.

This sequence belongs to the glycosyl hydrolase 5 (cellulase A) family.

The protein localises to the cell membrane. It catalyses the reaction Endohydrolysis of (1-&gt;4)-beta-D-glucosidic linkages in cellulose, lichenin and cereal beta-D-glucans.. The protein is Endoglucanase (egl) of Ralstonia nicotianae (strain ATCC BAA-1114 / GMI1000) (Ralstonia solanacearum).